Reading from the N-terminus, the 132-residue chain is Small ribosomal subunit protein uS8 (132 aa).

This sequence belongs to the universal ribosomal protein uS8 family. As to quaternary structure, part of the 30S ribosomal subunit. Contacts proteins S5 and S12.

Its function is as follows. One of the primary rRNA binding proteins, it binds directly to 16S rRNA central domain where it helps coordinate assembly of the platform of the 30S subunit. In Leifsonia xyli subsp. xyli (strain CTCB07), this protein is Small ribosomal subunit protein uS8.